The primary structure comprises 427 residues: MKLRTKAKALRGRLRVPGDKSISHRAVIFGAIAEGQTVIHGLLRGQDVLATIQAFRDLGVTIYEAADSLIIEGRGFKGLKPAQKPLDMGNSGTSMRLLAGLLAAQDFSVQLLGDDSLSRRPMDRITIPLSLMGAELSGQGEKELPPLIVKGCQELRPIHYQLPVASAQVKSAILLAALQTQGETVILEKELTRNHTEEMIEQFGGKLSIAGKQISIKGPQRLQGQILQIPGDISSAAFWLAAGLIVPGSDLVLENVGINPTRTGLLEVIEKMGGQLSYQAVDKDIQSASLRVSYSSLKGVEISGDLIPRLIDELPVIALLATQAQGTTYIRNAQELRVKETDRIQAVTDVLGQMGADIQATEDGMVIRGKTPLHGAAVSTCGDHRIGMMTAIAALLVEEGQVTLERAEAILTSYPDFFKDLERLWHD.

3-phosphoshikimate is bound by residues K20, S21, and R25. Residue K20 participates in phosphoenolpyruvate binding. Positions 92 and 120 each coordinate phosphoenolpyruvate. Positions 166, 168, 312, and 339 each coordinate 3-phosphoshikimate. Q168 is a binding site for phosphoenolpyruvate. The Proton acceptor role is filled by D312. R343 and R385 together coordinate phosphoenolpyruvate.

This sequence belongs to the EPSP synthase family. Monomer.

It localises to the cytoplasm. It catalyses the reaction 3-phosphoshikimate + phosphoenolpyruvate = 5-O-(1-carboxyvinyl)-3-phosphoshikimate + phosphate. Its pathway is metabolic intermediate biosynthesis; chorismate biosynthesis; chorismate from D-erythrose 4-phosphate and phosphoenolpyruvate: step 6/7. Catalyzes the transfer of the enolpyruvyl moiety of phosphoenolpyruvate (PEP) to the 5-hydroxyl of shikimate-3-phosphate (S3P) to produce enolpyruvyl shikimate-3-phosphate and inorganic phosphate. This chain is 3-phosphoshikimate 1-carboxyvinyltransferase, found in Streptococcus equi subsp. zooepidemicus (strain H70).